The chain runs to 199 residues: dTTP/UTP pyrophosphatase (199 aa).

The Proton acceptor role is filled by aspartate 76.

It belongs to the Maf family. YhdE subfamily. Requires a divalent metal cation as cofactor.

The protein localises to the cytoplasm. The enzyme catalyses dTTP + H2O = dTMP + diphosphate + H(+). It catalyses the reaction UTP + H2O = UMP + diphosphate + H(+). Its function is as follows. Nucleoside triphosphate pyrophosphatase that hydrolyzes dTTP and UTP. May have a dual role in cell division arrest and in preventing the incorporation of modified nucleotides into cellular nucleic acids. This Chlorobaculum parvum (strain DSM 263 / NCIMB 8327) (Chlorobium vibrioforme subsp. thiosulfatophilum) protein is dTTP/UTP pyrophosphatase.